The chain runs to 235 residues: Putative N-acetylmannosamine-6-phosphate 2-epimerase (235 aa).

It belongs to the NanE family.

The catalysed reaction is an N-acyl-D-glucosamine 6-phosphate = an N-acyl-D-mannosamine 6-phosphate. The protein operates within amino-sugar metabolism; N-acetylneuraminate degradation; D-fructose 6-phosphate from N-acetylneuraminate: step 3/5. Its function is as follows. Converts N-acetylmannosamine-6-phosphate (ManNAc-6-P) to N-acetylglucosamine-6-phosphate (GlcNAc-6-P). This Aliivibrio fischeri (strain ATCC 700601 / ES114) (Vibrio fischeri) protein is Putative N-acetylmannosamine-6-phosphate 2-epimerase.